A 166-amino-acid chain; its full sequence is MNYFFSLVLVFLVLSVVVLGVVSAPYQGVVALMGVSFFCCIFMVFLGRTFAALVMYIVYLGGLVVVFGYCVSVEKESGIYSVGGTKYFIVCVSLLLVVLLCLLREVGGLLVYVNWGDLVCLEMNGVGVFYFSGGWGLIVCSWGLLVVLFSILVILSWSRLGGLRPF.

6 consecutive transmembrane segments (helical) span residues phenylalanine 4–alanine 24, glutamine 27–glycine 47, phenylalanine 50–cysteine 70, valine 82–leucine 102, leucine 109–phenylalanine 129, and tryptophan 135–leucine 155.

It belongs to the complex I subunit 6 family.

It localises to the mitochondrion membrane. It carries out the reaction a ubiquinone + NADH + 5 H(+)(in) = a ubiquinol + NAD(+) + 4 H(+)(out). Its function is as follows. Core subunit of the mitochondrial membrane respiratory chain NADH dehydrogenase (Complex I) that is believed to belong to the minimal assembly required for catalysis. Complex I functions in the transfer of electrons from NADH to the respiratory chain. The immediate electron acceptor for the enzyme is believed to be ubiquinone. The polypeptide is NADH-ubiquinone oxidoreductase chain 6 (MT-ND6) (Lycodon semicarinatus (Ryukyu odd-tooth snake)).